We begin with the raw amino-acid sequence, 304 residues long: tRNA dimethylallyltransferase (304 aa).

13-20 (GPTAAGKT) lines the ATP pocket. 15-20 (TAAGKT) is a substrate binding site. Positions 38 to 41 (DSRQ) are interaction with substrate tRNA.

Belongs to the IPP transferase family. Monomer. Requires Mg(2+) as cofactor.

It carries out the reaction adenosine(37) in tRNA + dimethylallyl diphosphate = N(6)-dimethylallyladenosine(37) in tRNA + diphosphate. Its function is as follows. Catalyzes the transfer of a dimethylallyl group onto the adenine at position 37 in tRNAs that read codons beginning with uridine, leading to the formation of N6-(dimethylallyl)adenosine (i(6)A). This chain is tRNA dimethylallyltransferase, found in Cytophaga hutchinsonii (strain ATCC 33406 / DSM 1761 / CIP 103989 / NBRC 15051 / NCIMB 9469 / D465).